The primary structure comprises 161 residues: Peptidyl-prolyl cis-trans isomerase-like 3 (161 aa).

Position 2 is an N-acetylserine (serine 2). A PPIase cyclophilin-type domain is found at 2-154 (SVTLHTDVGD…NDVHIKDITI (153 aa)). Position 61 is an omega-N-methylarginine (arginine 61).

Belongs to the cyclophilin-type PPIase family. PPIL3 subfamily. As to quaternary structure, identified in the spliceosome C complex. As to expression, ubiquitous. Detected at low levels.

It catalyses the reaction [protein]-peptidylproline (omega=180) = [protein]-peptidylproline (omega=0). Its function is as follows. PPIases accelerate the folding of proteins. It catalyzes the cis-trans isomerization of proline imidic peptide bonds in oligopeptides. May be involved in pre-mRNA splicing. The polypeptide is Peptidyl-prolyl cis-trans isomerase-like 3 (PPIL3) (Homo sapiens (Human)).